The primary structure comprises 83 residues: Short neurotoxin VAN-29 (83 aa).

The N-terminal stretch at 1–21 is a signal peptide; it reads MKTLLLTLVVVTIVCLDLGYT. Disulfide bonds link Cys-24–Cys-45, Cys-38–Cys-62, Cys-64–Cys-75, and Cys-76–Cys-81.

The protein belongs to the three-finger toxin family. Short-chain subfamily. Type I alpha-neurotoxin sub-subfamily. As to expression, expressed by the venom gland.

It localises to the secreted. Binds to muscle nicotinic acetylcholine receptor (nAChR) and inhibit acetylcholine from binding to the receptor, thereby impairing neuromuscular transmission. The sequence is that of Short neurotoxin VAN-29 from Laticauda laticaudata (Blue-ringed sea krait).